The chain runs to 153 residues: Small ribosomal subunit protein uS13 (153 aa).

This sequence belongs to the universal ribosomal protein uS13 family.

The protein resides in the cytoplasm. Located at the top of the head of the 40S subunit, it contacts several helices of the 18S rRNA. The chain is Small ribosomal subunit protein uS13 (RPS18) from Chlamydomonas reinhardtii (Chlamydomonas smithii).